We begin with the raw amino-acid sequence, 552 residues long: Cilia- and flagella- associated protein 210 (552 aa).

Coiled coils occupy residues 53–143 (DEWK…NAKQ), 186–307 (EEQL…KKRL), 348–409 (IARD…VMKA), and 460–488 (TEAL…TTNK). Positions 216–238 (KDHLKQIKEHEEEEERRKKYEEK) are disordered.

As to quaternary structure, microtubule inner protein component of sperm flagellar doublet microtubules. In terms of tissue distribution, expressed in airway epithelial cells.

The protein localises to the cytoplasm. It localises to the cytoskeleton. The protein resides in the cilium axoneme. Its subcellular location is the flagellum axoneme. Functionally, microtubule inner protein (MIP) part of the dynein-decorated doublet microtubules (DMTs) in cilia axoneme, which is required for motile cilia beating. This is Cilia- and flagella- associated protein 210 from Homo sapiens (Human).